Consider the following 100-residue polypeptide: NAD(P)H-quinone oxidoreductase subunit 4L, chloroplastic (100 aa).

Transmembrane regions (helical) follow at residues 2–22, 28–48, and 61–81; these read ILQH…FGLI, VKIL…LVIF, and LFGL…LAIL.

It belongs to the complex I subunit 4L family. NDH is composed of at least 16 different subunits, 5 of which are encoded in the nucleus.

Its subcellular location is the plastid. The protein resides in the chloroplast thylakoid membrane. It catalyses the reaction a plastoquinone + NADH + (n+1) H(+)(in) = a plastoquinol + NAD(+) + n H(+)(out). The catalysed reaction is a plastoquinone + NADPH + (n+1) H(+)(in) = a plastoquinol + NADP(+) + n H(+)(out). NDH shuttles electrons from NAD(P)H:plastoquinone, via FMN and iron-sulfur (Fe-S) centers, to quinones in the photosynthetic chain and possibly in a chloroplast respiratory chain. The immediate electron acceptor for the enzyme in this species is believed to be plastoquinone. Couples the redox reaction to proton translocation, and thus conserves the redox energy in a proton gradient. This is NAD(P)H-quinone oxidoreductase subunit 4L, chloroplastic from Chara vulgaris (Common stonewort).